Here is a 287-residue protein sequence, read N- to C-terminus: SPX domain-containing protein 2 (287 aa).

In terms of domain architecture, SPX spans 1-162; that stretch reads MKFGKSLSNQ…GALIRLPFIQ (162 aa). Basic and acidic residues predominate over residues 36 to 50; the sequence is EPRSVENRPNKRSRS. Disordered stretches follow at residues 36–61 and 194–213; these read EPRSVENRPNKRSRSDSNSVDTDPTV and KSRNLDEEGEPTTSGMVKTG.

The protein localises to the nucleus. May inhibit PHR1 DNA-binding activity in a Pi-dependent manner. The sequence is that of SPX domain-containing protein 2 from Arabidopsis thaliana (Mouse-ear cress).